Here is a 303-residue protein sequence, read N- to C-terminus: UDP-N-acetylenolpyruvoylglucosamine reductase (303 aa).

Positions 30-196 (IGGPADLLII…LEAVFKLKQD (167 aa)) constitute an FAD-binding PCMH-type domain. Arg-174 is an active-site residue. The active-site Proton donor is the Ser-225. The active site involves Glu-295.

It belongs to the MurB family. Requires FAD as cofactor.

The protein localises to the cytoplasm. It carries out the reaction UDP-N-acetyl-alpha-D-muramate + NADP(+) = UDP-N-acetyl-3-O-(1-carboxyvinyl)-alpha-D-glucosamine + NADPH + H(+). It participates in cell wall biogenesis; peptidoglycan biosynthesis. Cell wall formation. The sequence is that of UDP-N-acetylenolpyruvoylglucosamine reductase from Bacillus pumilus (strain SAFR-032).